Reading from the N-terminus, the 156-residue chain is ATP synthase subunit b (156 aa).

The chain crosses the membrane as a helical span at residues 11–31 (AIAFAVFVWFCMKYVWPPLLA).

The protein belongs to the ATPase B chain family. F-type ATPases have 2 components, F(1) - the catalytic core - and F(0) - the membrane proton channel. F(1) has five subunits: alpha(3), beta(3), gamma(1), delta(1), epsilon(1). F(0) has three main subunits: a(1), b(2) and c(10-14). The alpha and beta chains form an alternating ring which encloses part of the gamma chain. F(1) is attached to F(0) by a central stalk formed by the gamma and epsilon chains, while a peripheral stalk is formed by the delta and b chains.

The protein resides in the cell inner membrane. Its function is as follows. F(1)F(0) ATP synthase produces ATP from ADP in the presence of a proton or sodium gradient. F-type ATPases consist of two structural domains, F(1) containing the extramembraneous catalytic core and F(0) containing the membrane proton channel, linked together by a central stalk and a peripheral stalk. During catalysis, ATP synthesis in the catalytic domain of F(1) is coupled via a rotary mechanism of the central stalk subunits to proton translocation. In terms of biological role, component of the F(0) channel, it forms part of the peripheral stalk, linking F(1) to F(0). This chain is ATP synthase subunit b, found in Psychromonas ingrahamii (strain DSM 17664 / CCUG 51855 / 37).